We begin with the raw amino-acid sequence, 155 residues long: Large ribosomal subunit protein uL22 (155 aa).

It belongs to the universal ribosomal protein uL22 family. In terms of assembly, part of the 50S ribosomal subunit.

Its function is as follows. This protein binds specifically to 23S rRNA. It makes multiple contacts with different domains of the 23S rRNA in the assembled 50S subunit and ribosome. Functionally, the globular domain of the protein is located near the polypeptide exit tunnel on the outside of the subunit, while an extended beta-hairpin is found that lines the wall of the exit tunnel in the center of the 70S ribosome. This chain is Large ribosomal subunit protein uL22, found in Pyrococcus abyssi (strain GE5 / Orsay).